Here is a 482-residue protein sequence, read N- to C-terminus: UDP-N-acetylmuramate--L-alanine ligase (482 aa).

111–117 (GTHGKTT) provides a ligand contact to ATP.

It belongs to the MurCDEF family.

The protein resides in the cytoplasm. It carries out the reaction UDP-N-acetyl-alpha-D-muramate + L-alanine + ATP = UDP-N-acetyl-alpha-D-muramoyl-L-alanine + ADP + phosphate + H(+). Its pathway is cell wall biogenesis; peptidoglycan biosynthesis. Functionally, cell wall formation. The protein is UDP-N-acetylmuramate--L-alanine ligase of Symbiobacterium thermophilum (strain DSM 24528 / JCM 14929 / IAM 14863 / T).